A 65-amino-acid polypeptide reads, in one-letter code: MLSNGLKIDQEKKFFILIIIIINNNNNNNNNNNNNNNNNNNNNNNNNNNNNNNNKNNKNNNKNND.

Residues 24–65 (NNNNNNNNNNNNNNNNNNNNNNNNNNNNNNNKNNKNNNKNND) form a disordered region.

This is an uncharacterized protein from Dictyostelium discoideum (Social amoeba).